Reading from the N-terminus, the 297-residue chain is Probable tyrosine phosphatase protein J2 (297 aa).

The Tyrosine-protein phosphatase domain maps to 21-286 (DSLSCIIQEY…VFCYHLIHAY (266 aa)). The active-site Phosphocysteine intermediate is Cys-227.

It belongs to the protein-tyrosine phosphatase family.

It carries out the reaction O-phospho-L-tyrosyl-[protein] + H2O = L-tyrosyl-[protein] + phosphate. This chain is Probable tyrosine phosphatase protein J2 (J3), found in Microplitis demolitor (Parasitoid wasp).